The sequence spans 745 residues: Junction plakoglobin (745 aa).

Position 1 is an N-acetylmethionine (Met1). O-linked (GlcNAc) threonine glycosylation is present at Thr14. 2 positions are modified to phosphoserine: Ser99 and Ser125. ARM repeat units lie at residues 132 to 171, 172 to 215, 216 to 255, 258 to 297, 298 to 341, 342 to 381, 383 to 420, 423 to 464, 470 to 510, 512 to 551, 574 to 613, and 615 to 661; these read NYQD…QLSK, KEAS…LSHH, REGL…NLLL, EGAK…LLAY, GNQE…LSVC, PSNK…NLSD, ATKQ…NLTC, SKNK…HLTS, EMAQ…NLAL, PANH…QPYT, PMNR…ELAQ, and KEAA…PDYR. The segment at 132-297 is interaction with DSC1 and DSG1; that stretch reads NYQDDAELAT…TTDCLQLLAY (166 aa). Position 182 is a phosphoserine (Ser182). The interval 574–661 is interaction with DSC1; the sequence is PMNRMEIFRL…ISEDKNPDYR (88 aa). A phosphoserine mark is found at Ser665 and Ser730.

This sequence belongs to the beta-catenin family. As to quaternary structure, homodimer. Component of an E-cadherin/catenin adhesion complex composed of at least E-cadherin/CDH1 and gamma-catenin/JUP, and possibly alpha-catenin/CTNNA1; the complex is located to adherens junctions. The stable association of CTNNA1 is controversial as CTNNA1 was shown not to bind to F-actin when assembled in the complex. Interacts with MUC1. Interacts with CAV1. Interacts with PTPRJ. Interacts with DSG1. Interacts with DSC1 and DSC2. Interacts with PKP2. Interacts with PKP3 (via N-terminus); the interaction is required for PKP3 localization to desmosome cell-cell junctions. Interacts with DSG4. May be phosphorylated by FER. Expressed in the heart (at protein level).

It localises to the cell junction. The protein resides in the adherens junction. The protein localises to the desmosome. It is found in the cytoplasm. Its subcellular location is the cytoskeleton. It localises to the cell membrane. The protein resides in the nucleus. Common junctional plaque protein. The membrane-associated plaques are architectural elements in an important strategic position to influence the arrangement and function of both the cytoskeleton and the cells within the tissue. The presence of plakoglobin in both the desmosomes and in the intermediate junctions suggests that it plays a central role in the structure and function of submembranous plaques. Acts as a substrate for VE-PTP and is required by it to stimulate VE-cadherin function in endothelial cells. Can replace beta-catenin in E-cadherin/catenin adhesion complexes which are proposed to couple cadherins to the actin cytoskeleton. The sequence is that of Junction plakoglobin from Homo sapiens (Human).